The following is a 207-amino-acid chain: MNSIIKEHYFEHKSTIELARDILGMRLVHQTQHVKLSGYIVETEAYLGATDIAAHSYRNLKTKRTDIMYQPAGAIYMYQMHRQVLLNFITMKEGVPEAVLIRAIEPDEASIPYMEIKRNGKTGSELTNGPGKLTQALGLTIKDYGKTLFNSNIWLEEAKIPHIIEATNRIGVPNKGIATHYPLRFTVKGSRYISGQRKGQILTEIWQ.

Belongs to the DNA glycosylase MPG family.

In Listeria welshimeri serovar 6b (strain ATCC 35897 / DSM 20650 / CCUG 15529 / CIP 8149 / NCTC 11857 / SLCC 5334 / V8), this protein is Putative 3-methyladenine DNA glycosylase.